Consider the following 108-residue polypeptide: ATP synthase epsilon chain (108 aa).

It belongs to the ATPase epsilon chain family. In terms of assembly, F-type ATPases have 2 components, CF(1) - the catalytic core - and CF(0) - the membrane proton channel. CF(1) has five subunits: alpha(3), beta(3), gamma(1), delta(1), epsilon(1). CF(0) has three main subunits: a, b and c.

The protein localises to the cell inner membrane. Its function is as follows. Produces ATP from ADP in the presence of a proton gradient across the membrane. This is ATP synthase epsilon chain from Rickettsia bellii (strain OSU 85-389).